A 128-amino-acid chain; its full sequence is Glycophorin-C (128 aa).

Positions 1–12 (MWSTRSPNSTAW) are enriched in polar residues. The interval 1 to 48 (MWSTRSPNSTAWPLSLEPDPGMASASTTMHTTTIAEPDPGMSGWPDGR) is disordered. The Extracellular portion of the chain corresponds to 1-57 (MWSTRSPNSTAWPLSLEPDPGMASASTTMHTTTIAEPDPGMSGWPDGRMETSTPTIM). O-linked (GalNAc...) serine glycosylation is present at Ser-3. Thr-4 carries an O-linked (GalNAc...) threonine glycan. O-linked (GalNAc...) serine glycosylation is present at Ser-6. Asn-8 is a glycosylation site (N-linked (GlcNAc...) asparagine). Ser-9 is a glycosylation site (O-linked (GalNAc...) serine). A glycan (O-linked (GalNAc...) threonine) is linked at Thr-10. O-linked (GalNAc...) serine glycans are attached at residues Ser-15, Ser-24, and Ser-26. Low complexity predominate over residues 22-33 (MASASTTMHTTT). Thr-27, Thr-28, Thr-31, Thr-32, and Thr-33 each carry an O-linked (GalNAc...) threonine glycan. Residue Ser-42 is glycosylated (O-linked (GalNAc...) serine). Residues 58 to 81 (DIVVIAGVIAAVAIVLVSLLFVML) form a helical; Signal-anchor for type III membrane protein membrane-spanning segment. Residues 82–128 (RYMYRHKGTYHTNEAKGTEFAESADAALQGDPALQDAGDSSRKEYFI) lie on the Cytoplasmic side of the membrane. A phosphoserine mark is found at Ser-104 and Ser-122. The interval 108 to 128 (ALQGDPALQDAGDSSRKEYFI) is disordered.

It belongs to the glycophorin-C family. In terms of processing, O-glycosylated with core 1 or possibly core 8 glycans. In terms of tissue distribution, glycophorin-C is expressed in erythrocytes. Glycophorin-D and IsoGPC are ubiquitously expressed.

It is found in the cell membrane. In terms of biological role, this protein is a minor sialoglycoprotein in human erythrocyte membranes. The blood group Gerbich antigens and receptors for Plasmodium falciparum merozoites are most likely located within the extracellular domain. Glycophorin-C plays an important role in regulating the stability of red cells. This chain is Glycophorin-C (GYPC), found in Homo sapiens (Human).